The sequence spans 444 residues: Homogentisate 1,2-dioxygenase (444 aa).

Histidine 298 (proton acceptor) is an active-site residue. Histidine 341 and glutamate 347 together coordinate Fe cation. Homogentisate contacts are provided by tyrosine 356 and histidine 377. Histidine 377 lines the Fe cation pocket.

The protein belongs to the homogentisate dioxygenase family. In terms of assembly, hexamer; dimer of trimers. Fe cation is required as a cofactor.

It catalyses the reaction homogentisate + O2 = 4-maleylacetoacetate + H(+). It participates in amino-acid degradation; L-phenylalanine degradation; acetoacetate and fumarate from L-phenylalanine: step 4/6. In terms of biological role, involved in the catabolism of homogentisate (2,5-dihydroxyphenylacetate or 2,5-OH-PhAc), a central intermediate in the degradation of phenylalanine and tyrosine. Catalyzes the oxidative ring cleavage of the aromatic ring of homogentisate to yield maleylacetoacetate. This is Homogentisate 1,2-dioxygenase from Burkholderia orbicola (strain MC0-3).